The sequence spans 598 residues: NADH-quinone oxidoreductase subunit C/D (598 aa).

The segment at 1 to 188 (MTDSTTHDAL…DPFVLTKQKE (188 aa)) is NADH dehydrogenase I subunit C. Residues 212–598 (DFMFLNLGPN…IDFVMSDVDR (387 aa)) are NADH dehydrogenase I subunit D.

In the N-terminal section; belongs to the complex I 30 kDa subunit family. This sequence in the C-terminal section; belongs to the complex I 49 kDa subunit family. NDH-1 is composed of 13 different subunits. Subunits NuoB, CD, E, F, and G constitute the peripheral sector of the complex.

It is found in the cell inner membrane. The catalysed reaction is a quinone + NADH + 5 H(+)(in) = a quinol + NAD(+) + 4 H(+)(out). Its function is as follows. NDH-1 shuttles electrons from NADH, via FMN and iron-sulfur (Fe-S) centers, to quinones in the respiratory chain. The immediate electron acceptor for the enzyme in this species is believed to be ubiquinone. Couples the redox reaction to proton translocation (for every two electrons transferred, four hydrogen ions are translocated across the cytoplasmic membrane), and thus conserves the redox energy in a proton gradient. The chain is NADH-quinone oxidoreductase subunit C/D from Serratia proteamaculans (strain 568).